A 107-amino-acid chain; its full sequence is Integration host factor subunit alpha (107 aa).

It belongs to the bacterial histone-like protein family. Heterodimer of an alpha and a beta chain.

This protein is one of the two subunits of integration host factor, a specific DNA-binding protein that functions in genetic recombination as well as in transcriptional and translational control. This Brucella anthropi (strain ATCC 49188 / DSM 6882 / CCUG 24695 / JCM 21032 / LMG 3331 / NBRC 15819 / NCTC 12168 / Alc 37) (Ochrobactrum anthropi) protein is Integration host factor subunit alpha.